Consider the following 68-residue polypeptide: UPF0434 protein H16_A0605 (68 aa).

This sequence belongs to the UPF0434 family.

This is UPF0434 protein H16_A0605 from Cupriavidus necator (strain ATCC 17699 / DSM 428 / KCTC 22496 / NCIMB 10442 / H16 / Stanier 337) (Ralstonia eutropha).